A 2845-amino-acid polypeptide reads, in one-letter code: Adenomatous polyposis coli protein (2845 aa).

Position 2 is an N-acetylalanine (A2). Positions 2-61 form a coiled coil; it reads AAASYDQLLKQVEALKMENSNLRQELEDNSNHLTKLETEASNMKEVLKQLQGSIEDETMT. Phosphoserine occurs at positions 105 and 109. Residues 125 to 245 adopt a coiled-coil conformation; the sequence is SRESTGYLEE…QAAEAERSSQ (121 aa). Residues 238–304 form a disordered region; that stretch reads AEAERSSQSR…THSAPRRLTS (67 aa). Basic and acidic residues predominate over residues 239–263; sequence EAERSSQSRHDAASHEAGRQHEGHG. The span at 266-279 shows a compositional bias: polar residues; the sequence is ESNTAASSSGQSPA. ARM repeat units lie at residues 451–493, 503–545, 546–589, 590–636, 637–681, 682–723, and 724–765; these read LMKL…HYSV, LTNL…IASV, LRNL…VLSA, LWNL…GGGI, LRNV…ACGT, LWNL…SAAA, and LRNL…LDAQ. A phosphoserine mark is found at S742, S746, and S778. A disordered region spans residues 828–873; sequence VLPSSSSSRGSLDSSRSEKDRSLERERGIGLSAYHPTTENAGTSSK. Low complexity predominate over residues 831–841; it reads SSSSSRGSLDS. The segment covering 842-855 has biased composition (basic and acidic residues); that stretch reads SRSEKDRSLERERG. The span at 862–873 shows a compositional bias: polar residues; it reads HPTTENAGTSSK. S906 bears the Phosphoserine mark. Disordered stretches follow at residues 921-942 and 956-986; these read RRSS…ENSN and RSSN…SYSE. The span at 927–942 shows a compositional bias: polar residues; sequence HTHSNTYNFTKSENSN. Low complexity predominate over residues 959–969; the sequence is NDSLNSVTSSD. S985, S1036, and S1040 each carry phosphoserine. The interaction with catenins stretch occupies residues 1018-1168; it reads ELDTPINYSL…TNYSIKYNEE (151 aa). Disordered stretches follow at residues 1058–1079, 1092–1168, 1189–1247, and 1307–1375; these read IKQN…YSEN, GQQE…YNEE, SQKP…GTTC, and ENDV…PEHY. Composition is skewed to polar residues over residues 1066 to 1078 and 1103 to 1128; these read ARSQ…VYSE and RGTS…QSLC. Over residues 1189 to 1204 the composition is skewed to low complexity; the sequence is SQKPSFSFSKNSSAQS. A compositionally biased stretch (polar residues) spans 1211 to 1245; the sequence is SPSSENTAVPPSNAKRQNQLRPSSAQRNGQTQKGT. Over residues 1354–1365 the composition is skewed to low complexity; the sequence is SSGAKSPSKSGA. A phosphoserine mark is found at S1359, S1370, S1384, S1391, and S1394. Disordered stretches follow at residues 1400 to 1474, 1525 to 1568, 1587 to 1606, 1746 to 2010, and 2042 to 2069; these read IASS…VNAA, PPVQ…SDDD, RKAK…VARK, DQVQ…APKS, and ISSA…KVGG. Position 1437 is a phosphothreonine (T1437). Basic and acidic residues predominate over residues 1447-1465; it reads AKREVPKSKVPAAEKRESG. Positions 1532–1546 are enriched in acidic residues; sequence NGNETESEQPEESNE. Positions 1547-1562 are enriched in basic and acidic residues; the sequence is NQDKEVEKPDSEKDLL. Phosphoserine is present on S1565. The segment covering 1747–1762 has biased composition (polar residues); that stretch reads QVQQASSTSSGANKNQ. A Phosphoserine modification is found at S1772. Over residues 1783-1792 the composition is skewed to basic and acidic residues; sequence YRTRVRKNTD. Residues S1859, S1861, and S1862 each carry the phosphoserine modification. The interval 1864 to 1891 is highly charged; sequence DFDDDDVDLSREKAELRKGKESKDSEAK. A compositionally biased stretch (basic and acidic residues) spans 1871–1894; that stretch reads DLSREKAELRKGKESKDSEAKVTC. Positions 1900-1911 are enriched in low complexity; sequence SSQQAASKSQAS. Residues 1927–1936 show a composition bias toward polar residues; sequence KQPTFPQSSK. Basic and acidic residues predominate over residues 1937 to 1949; that stretch reads DGPDRGAATDEKL. S1969 and S1971 each carry phosphoserine. Residues 1979–1990 are compositionally biased toward basic and acidic residues; the sequence is NNKESEPIKEAE. Residues 2034-2058 are interaction with AXIN1; that stretch reads EDDLLQECISSAMPKKKRPSRLKSE. A phosphoserine mark is found at S2087, S2092, S2125, S2129, S2130, and S2132. 3 disordered regions span residues 2146 to 2190, 2202 to 2652, and 2664 to 2845; these read SPFH…GIKG, KIRS…PPVS, and CPIN…VTSV. Residue T2151 is modified to Phosphothreonine. The basic region stretch occupies residues 2167-2674; it reads ILKPGEKSTL…PINNPRSGRS (508 aa). Positions 2169-2187 are enriched in basic and acidic residues; it reads KPGEKSTLEAKKIESENKG. Polar residues-rich tracts occupy residues 2203 to 2223 and 2257 to 2272; these read IRSN…NMPS and ASKS…TSPR. Residues S2260, S2270, and S2283 each carry the phosphoserine modification. Positions 2290–2311 are enriched in low complexity; the sequence is SQISGSNKGSSRSGSRDSTPSR. The span at 2312-2331 shows a compositional bias: polar residues; it reads PTQQPLSRPMQSPGRNSISP. Residues 2348–2369 are compositionally biased toward low complexity; sequence TSSPSTASTKSSGSGKMSYTSP. Positions 2370-2411 are enriched in polar residues; the sequence is GRQLSQQNLTKQASLSKNASSIPRSESASKGLNQMSNGNGSN. Composition is skewed to low complexity over residues 2417–2429 and 2459–2477; these read SRMS…GSES and SASF…PTRS. 2 positions are modified to phosphoserine: S2473 and S2535. Residues 2475 to 2845 are interaction with DLG1; that stretch reads TRSQAQTPVL…HSGSYLVTSV (371 aa). Positions 2518–2535 are enriched in basic and acidic residues; the sequence is NDGRPTKRHDIARSHSES. Residues 2555-2568 are compositionally biased toward polar residues; sequence SSSLPRVSTWRRTG. At S2569 the chain carries Phosphoserine. The span at 2569 to 2579 shows a compositional bias: low complexity; sequence SSSSILSASSE. Positions 2580–2592 are enriched in basic and acidic residues; it reads SSEKAKSEDERHV. Residues 2626 to 2638 show a composition bias toward low complexity; it reads ASQSASSGAASGA. Residues 2668–2679 show a composition bias toward polar residues; that stretch reads NPRSGRSPTGNT. Phosphoserine is present on residues S2671 and S2674. The segment at 2674-2845 is interaction with MAPRE1; that stretch reads SPTGNTPPVI…HSGSYLVTSV (172 aa). T2679 is subject to Phosphothreonine. Residues 2684 to 2694 are compositionally biased toward low complexity; sequence DSVSEKGSSSI. The segment covering 2695–2705 has biased composition (basic and acidic residues); sequence KDSKDSKDTHG. Residues 2706–2716 show a composition bias toward polar residues; that stretch reads KQSVGSGSPVQ. A phosphoserine mark is found at S2713 and S2726. Residues 2765–2776 show a composition bias toward low complexity; sequence SSSSSSKHSSPS. The segment covering 2786 to 2814 has biased composition (polar residues); that stretch reads FNYNPSPRKSSADSTSARPSQIPTPVSTN. Phosphoserine is present on S2791. Positions 2805–2808 match the Microtubule tip localization signal motif; it reads SQIP. The PDZ-binding signature appears at 2843–2845; it reads TSV.

The protein belongs to the adenomatous polyposis coli (APC) family. In terms of assembly, forms homooligomers. Found in a complex consisting of ARHGEF4, APC and CTNNB1. Found in a complex composed of MACF1, APC, AXIN1, CTNNB1 and GSK3B. The complex composed, at least, of APC, CTNNB1 and GSK3B interacts with JPT1; the interaction requires the inactive form of GSK3B (phosphorylated at 'Ser-9'). Interacts with APC2. Interacts with DLG1 (via PDZ domains) and DLG3 (via PDZ domains). Interacts with alpha- and beta-catenins. Interacts with AXIN1 (via RGS domain). Interacts with ARHGEF4 (via N-terminus). Interacts (via C-terminal residues 2674-2843) with MAPRE1 (via C-terminal residues 206-211); the interaction inhibits association with and bundling of F-actin. Interacts with MAPRE2 and MAPRE3 (via C-terminus). Interacts with DIAPH1; DIAPH1 acts as a scaffold protein for MAPRE1 and APC to stabilize microtubules and promote cell migration. Interacts with DIAPH2. Interacts with SCRIB; may mediate targeting to adherens junctions of epithelial cells. Interacts with SPATA13 (via N-terminus and SH3 domain). Interacts with ASAP1 (via SH3 domain). Interacts (at the cell membrane) with AMER1 and AMER2 (via ARM repeats). Interacts with KHDRBS1. Interacts with actin; binds both to F-actin and actin filament bundles. Post-translationally, phosphorylated; phosphorylation enhances the F-actin bundling activity. Phosphorylated by GSK3B. Ubiquitinated, leading to its degradation by the proteasome. Ubiquitination is facilitated by Axin. Deubiquitinated by ZRANB1/TRABID. Expressed in liver, spleen, kidney, heart, lung, brain, stomach, intestine, testis and ovary.

It is found in the cell junction. It localises to the adherens junction. The protein localises to the cytoplasm. The protein resides in the cytoskeleton. Its subcellular location is the cell projection. It is found in the lamellipodium. It localises to the ruffle membrane. The protein localises to the cell membrane. In terms of biological role, tumor suppressor. Promotes rapid degradation of CTNNB1 and participates in Wnt signaling as a negative regulator. APC activity is correlated with its phosphorylation state. Activates the GEF activity of SPATA13 and ARHGEF4. Plays a role in hepatocyte growth factor (HGF)-induced cell migration. Required for MMP9 up-regulation via the JNK signaling pathway in colorectal tumor cells. Associates with both microtubules and actin filaments, components of the cytoskeleton. Plays a role in mediating the organization of F-actin into ordered bundles. Functions downstream of Rho GTPases and DIAPH1 to selectively stabilize microtubules. Acts as a mediator of ERBB2-dependent stabilization of microtubules at the cell cortex. It is required for the localization of MACF1 to the cell membrane and this localization of MACF1 is critical for its function in microtubule stabilization. The protein is Adenomatous polyposis coli protein (Apc) of Mus musculus (Mouse).